The chain runs to 359 residues: CMP-N-acetylneuraminate-poly-alpha-2,8-sialyltransferase (359 aa).

Residues 1-7 (MRSIRKR) are Cytoplasmic-facing. Residues 8-20 (WTICTISLLLIFY) traverse the membrane as a helical; Signal-anchor for type II membrane protein segment. The Lumenal segment spans residues 21-359 (KTKEMARTEE…KLTTGKCIKQ (339 aa)). Asn-50, Asn-74, and Asn-119 each carry an N-linked (GlcNAc...) asparagine glycan. Cystine bridges form between Cys-142–Cys-292 and Cys-156–Cys-356. Residues Asn-147 and Asn-170 each coordinate CMP-N-acetyl-beta-neuraminate. 2 N-linked (GlcNAc...) asparagine glycosylation sites follow: Asn-204 and Asn-219. Positions 279, 280, 281, and 301 each coordinate CMP-N-acetyl-beta-neuraminate. His-331 acts as the Proton donor/acceptor in catalysis.

It belongs to the glycosyltransferase 29 family. Post-translationally, autopolysialylated.

It is found in the golgi apparatus membrane. The protein resides in the secreted. It carries out the reaction [N-acetyl-alpha-D-neuraminosyl-(2-&gt;8)](n) + CMP-N-acetyl-beta-neuraminate = [N-acetyl-alpha-D-neuraminosyl-(2-&gt;8)](n+1) + CMP + H(+). Its function is as follows. Catalyzes the transfer of a sialic acid from a CMP-linked sialic acid donor onto a terminal alpha-2,3-, alpha-2,6-, or alpha-2,8-linked sialic acid of an N-linked glycan protein acceptor through alpha-2,8-linkages. Therefore, participates in polysialic acid synthesis on various sialylated N-acetyllactosaminyl oligosaccharides, including NCAM1 N-glycans, FETUB N-glycans and AHSG. It is noteworthy that alpha-2,3-linked sialic acid is apparently a better acceptor than alpha-2,6-linked sialic acid. The polypeptide is CMP-N-acetylneuraminate-poly-alpha-2,8-sialyltransferase (ST8SIA4) (Bos taurus (Bovine)).